A 452-amino-acid polypeptide reads, in one-letter code: MSQRKYFGTDGVRGEVGGPVINAAFALRLGYAAGRVLAREHREHASGRGRNRPQVVIGKDTRISGYMLESALEAGLSAAGIDVLLAGPVPTPAVAYLTRTLRLAAGIVISASHNPYQDNGIKFFSAHGMKLPDDIEAAIEQALDEPLGCVGSEELGRARRMADAQGRYIEFCKSTFPHDLDLNGLKLVVDAAHGAAYNVAPHVFRELGAEVHAIGVSPDGFNINKGVGALHPESLAEEVRARGADLGIALDGDADRLQMVDGTGRIYNGDELLYAIVRERMQRGPVAGVVGTLMTNYGLERQLQQIGVGFERANVGDRYVLEQMQARGWLYGGESSGHLLCLDCHTTGDGTIAALQVLTALRRADATLAEWVADLRMYPQKMINVPLAPGLDWKTHDGLARARGAVEAELAGRGRVLIRASGTEPKLRLMVEAEDEALAQASAQKLADSLGA.

The Phosphoserine intermediate role is filled by Ser112. Residues Ser112, Asp251, Asp253, and Asp255 each contribute to the Mg(2+) site. Phosphoserine is present on Ser112.

The protein belongs to the phosphohexose mutase family. Mg(2+) is required as a cofactor. Activated by phosphorylation.

The enzyme catalyses alpha-D-glucosamine 1-phosphate = D-glucosamine 6-phosphate. In terms of biological role, catalyzes the conversion of glucosamine-6-phosphate to glucosamine-1-phosphate. This is Phosphoglucosamine mutase from Bordetella bronchiseptica (strain ATCC BAA-588 / NCTC 13252 / RB50) (Alcaligenes bronchisepticus).